Reading from the N-terminus, the 440-residue chain is Ribulose bisphosphate carboxylase large chain (440 aa).

An N6,N6,N6-trimethyllysine modification is found at lysine 4. Residues asparagine 113 and threonine 163 each coordinate substrate. Lysine 165 serves as the catalytic Proton acceptor. Lysine 167 provides a ligand contact to substrate. Residues lysine 191, aspartate 193, and glutamate 194 each contribute to the Mg(2+) site. Lysine 191 is modified (N6-carboxylysine). Histidine 284 (proton acceptor) is an active-site residue. Residues arginine 285, histidine 317, and serine 369 each coordinate substrate.

The protein belongs to the RuBisCO large chain family. Type I subfamily. As to quaternary structure, heterohexadecamer of 8 large chains and 8 small chains; disulfide-linked. The disulfide link is formed within the large subunit homodimers. Requires Mg(2+) as cofactor. The disulfide bond which can form in the large chain dimeric partners within the hexadecamer appears to be associated with oxidative stress and protein turnover.

It localises to the plastid. Its subcellular location is the chloroplast. It carries out the reaction 2 (2R)-3-phosphoglycerate + 2 H(+) = D-ribulose 1,5-bisphosphate + CO2 + H2O. The catalysed reaction is D-ribulose 1,5-bisphosphate + O2 = 2-phosphoglycolate + (2R)-3-phosphoglycerate + 2 H(+). Functionally, ruBisCO catalyzes two reactions: the carboxylation of D-ribulose 1,5-bisphosphate, the primary event in carbon dioxide fixation, as well as the oxidative fragmentation of the pentose substrate in the photorespiration process. Both reactions occur simultaneously and in competition at the same active site. The protein is Ribulose bisphosphate carboxylase large chain of Ptychomitrium gardneri (Gardner's ptychomitrium moss).